The primary structure comprises 365 residues: Beta-parvin (365 aa).

The span at 1–12 shows a compositional bias: pro residues; that stretch reads MSSAPPRSPTPR. Residues 1–52 are disordered; sequence MSSAPPRSPTPRAPKMKKDESFLGKLGGTLARKKKTREVTDLQEEGKSAINS. Serine 8 carries the post-translational modification Phosphoserine. Residues 37–47 show a composition bias toward basic and acidic residues; the sequence is REVTDLQEEGK. 2 consecutive Calponin-homology (CH) domains span residues 88–195 and 255–362; these read KELV…MHFR and NLVK…TKYK.

The protein belongs to the parvin family. In terms of assembly, interacts with ILK, ARHGEF6, PXN (via LD motifs), ACTN2 and actin. Interacts with DYSF. In terms of processing, phosphorylated by ILK. In terms of tissue distribution, expressed predominantly in heart and moderately in spleen, lung and skeletal muscle.

It localises to the cell junction. Its subcellular location is the focal adhesion. The protein localises to the cell membrane. It is found in the cytoplasm. The protein resides in the cytoskeleton. It localises to the cell projection. Its subcellular location is the lamellipodium. The protein localises to the myofibril. It is found in the sarcomere. The protein resides in the z line. In terms of biological role, adapter protein that plays a role in integrin signaling via ILK and in activation of the GTPases CDC42 and RAC1 by guanine exchange factors, such as ARHGEF6. Is involved in the reorganization of the actin cytoskeleton and formation of lamellipodia. Plays a role in cell adhesion, cell spreading, establishment or maintenance of cell polarity, and cell migration. The protein is Beta-parvin (Parvb) of Mus musculus (Mouse).